The primary structure comprises 185 residues: Ribosome-recycling factor (185 aa).

This sequence belongs to the RRF family.

Its subcellular location is the cytoplasm. Responsible for the release of ribosomes from messenger RNA at the termination of protein biosynthesis. May increase the efficiency of translation by recycling ribosomes from one round of translation to another. The chain is Ribosome-recycling factor from Streptococcus agalactiae serotype V (strain ATCC BAA-611 / 2603 V/R).